The following is a 420-amino-acid chain: D-tagatose-1,6-bisphosphate aldolase subunit GatZ (420 aa).

This sequence belongs to the GatZ/KbaZ family. GatZ subfamily. Forms a complex with GatY.

Its pathway is carbohydrate metabolism; D-tagatose 6-phosphate degradation; D-glyceraldehyde 3-phosphate and glycerone phosphate from D-tagatose 6-phosphate: step 2/2. In terms of biological role, component of the tagatose-1,6-bisphosphate aldolase GatYZ that is required for full activity and stability of the Y subunit. Could have a chaperone-like function for the proper and stable folding of GatY. When expressed alone, GatZ does not show any aldolase activity. Is involved in the catabolism of galactitol. The protein is D-tagatose-1,6-bisphosphate aldolase subunit GatZ of Escherichia coli O139:H28 (strain E24377A / ETEC).